A 136-amino-acid polypeptide reads, in one-letter code: ATP synthase epsilon chain (136 aa).

Residues 106-136 are disordered; that stretch reads MEGQPSSPEKLKAQQQLNEARARLQASKTAD.

The protein belongs to the ATPase epsilon chain family. As to quaternary structure, F-type ATPases have 2 components, CF(1) - the catalytic core - and CF(0) - the membrane proton channel. CF(1) has five subunits: alpha(3), beta(3), gamma(1), delta(1), epsilon(1). CF(0) has three main subunits: a, b and c.

The protein resides in the cellular thylakoid membrane. In terms of biological role, produces ATP from ADP in the presence of a proton gradient across the membrane. In Synechococcus sp. (strain CC9605), this protein is ATP synthase epsilon chain.